A 514-amino-acid chain; its full sequence is MVVEFKNEPGYDFSVQENVDMFKKALKDVEKELGQDIPLVINGEKIFKDDKIKSINPADTSQVIANASKATKQDVEDAFKAANEAYKSWKTWSANDRAELMLRVSAIIRRRKAEIAAIMVYEAGKPWDEAVGDAAEGIDFIEYYARSMMDLAQGKPVLDREGEHNKYFYKSIGTGVTIPPWNFPFAIMAGTTLAPVVAGNIVLLKPAEDTPYIAYKLMGILEEAGLPKGVVNFVPGDPKEIGDYLVDHKDTHFVTFTGSRATGTRIYERSAVVQEGQNFLKRVIAEMGGKDAIVVDENIDTDMAAEAIVTSAFGFSGQKCSACSRAIVHKDVYDEVLEKSIKLTKELTLGNTVDNTYMGPVINKKQFDKIKNYIEIGKEEGKLEQGGGTDDSKGYFVEPTIISGLKSKDRIMQEEIFGPVVGFVKVNDFDEAIEVANDTDYGLTGAVITNNREHWIKAVNEFDVGNLYLNRGCTSAVVGYHPFGGFKMSGTDAKTGSPDYLLHFLEQKVVSEMF.

Residues E286 and C320 contribute to the active site.

The protein belongs to the aldehyde dehydrogenase family. RocA subfamily.

It carries out the reaction L-glutamate 5-semialdehyde + NAD(+) + H2O = L-glutamate + NADH + 2 H(+). Its pathway is amino-acid degradation; L-proline degradation into L-glutamate; L-glutamate from L-proline: step 2/2. The polypeptide is 1-pyrroline-5-carboxylate dehydrogenase (Staphylococcus aureus (strain MSSA476)).